Reading from the N-terminus, the 201-residue chain is MLLSRYIDDDLRECGCDEAGRGCLAGPVYAAAVILPADFSHPLLNDSKQLSEKQRYTLRPVIESETIGWGIGIVSPQEIDEINILRASFLAMHRAIEQLPFRPERLLIDGNRFDPFEQIPHHCIVGGDARYRSIAAASILAKTYRDDSMLRLNKDFPMYGWERNKGYPSPAHKSAIRRFGVSPHHRLTFRGVVDADRPTTE.

Positions L11 to E201 constitute an RNase H type-2 domain. A divalent metal cation is bound by residues D17, E18, and D109.

Belongs to the RNase HII family. Mn(2+) is required as a cofactor. The cofactor is Mg(2+).

The protein resides in the cytoplasm. The enzyme catalyses Endonucleolytic cleavage to 5'-phosphomonoester.. Endonuclease that specifically degrades the RNA of RNA-DNA hybrids. This Porphyromonas gingivalis (strain ATCC BAA-308 / W83) protein is Ribonuclease HII (rnhB).